We begin with the raw amino-acid sequence, 479 residues long: Type I inositol polyphosphate 5-phosphatase 8 (479 aa).

Catalytic regions lie at residues 300–315 (DKVI…LRAS) and 379–394 (KRRT…WKGD).

The protein belongs to the inositol polyphosphate 5-phosphatase family.

This is Type I inositol polyphosphate 5-phosphatase 8 from Arabidopsis thaliana (Mouse-ear cress).